The following is a 505-amino-acid chain: 2,3-bisphosphoglycerate-independent phosphoglycerate mutase (505 aa).

Mn(2+) contacts are provided by Asp-13 and Ser-63. Residue Ser-63 is the Phosphoserine intermediate of the active site. Substrate contacts are provided by residues His-124, 153-154 (RD), Arg-183, Arg-189, 254-257 (RADR), and Lys-330. Positions 396, 400, 437, 438, and 456 each coordinate Mn(2+).

The protein belongs to the BPG-independent phosphoglycerate mutase family. As to quaternary structure, monomer. Mn(2+) serves as cofactor.

It catalyses the reaction (2R)-2-phosphoglycerate = (2R)-3-phosphoglycerate. It participates in carbohydrate degradation; glycolysis; pyruvate from D-glyceraldehyde 3-phosphate: step 3/5. Functionally, catalyzes the interconversion of 2-phosphoglycerate and 3-phosphoglycerate. This Roseobacter denitrificans (strain ATCC 33942 / OCh 114) (Erythrobacter sp. (strain OCh 114)) protein is 2,3-bisphosphoglycerate-independent phosphoglycerate mutase.